Consider the following 269-residue polypeptide: Holocytochrome-c synthase (269 aa).

The segment at methionine 1–aspartate 72 is disordered. HRM repeat units lie at residues glycine 25–histidine 30 and glutamate 41–glutamine 46.

It belongs to the cytochrome c-type heme lyase family.

It localises to the mitochondrion inner membrane. It is found in the mitochondrion intermembrane space. The enzyme catalyses holo-[cytochrome c] = apo-[cytochrome c] + heme b. Its function is as follows. Lyase that catalyzes the covalent linking of the heme group to the cytochrome C apoprotein to produce the mature functional cytochrome. The sequence is that of Holocytochrome-c synthase (CYC3) from Saccharomyces cerevisiae (strain ATCC 204508 / S288c) (Baker's yeast).